We begin with the raw amino-acid sequence, 202 residues long: Matrix protein (202 aa).

The segment at 14 to 33 is disordered; sequence EDTQKPSPASAPPDGDDLWL. The short motif at 35 to 38 is the PPXY motif element; sequence PPEY. The essential for glycoprotein binding stretch occupies residues 115-151; sequence KLRRTLIFQWADSRGPLEGEELEHSQEITWDDDTEFV.

This sequence belongs to the lyssavirus matrix protein family. As to quaternary structure, homomultimer. Interacts with nucleoprotein and with the cytoplasmic domain of glycoprotein. Interacts with host ATP6V1A; this interaction plays an important role in virion uncoating after viral entry.

Its subcellular location is the virion membrane. It is found in the host endomembrane system. The protein resides in the host cytoplasm. Plays a major role in assembly, budding and uncoating of virion after membrane fusion. Completely covers the ribonucleoprotein coil and keep it in condensed bullet-shaped form. Inhibits viral transcription and stimulates replication. Plays a major role in early induction of TRAIL-mediated apoptosis in infected neurons. Inhibits the integrated stress response (ISR) in the infected cell by blocking the formation of stress granules. The sequence is that of Matrix protein (M) from Rabies virus (strain HEP-Flury) (RABV).